The sequence spans 341 residues: Ferrochelatase (341 aa).

Fe cation is bound by residues His-210 and Glu-291.

The protein belongs to the ferrochelatase family.

The protein localises to the cytoplasm. It carries out the reaction heme b + 2 H(+) = protoporphyrin IX + Fe(2+). It participates in porphyrin-containing compound metabolism; protoheme biosynthesis; protoheme from protoporphyrin-IX: step 1/1. Its function is as follows. Catalyzes the ferrous insertion into protoporphyrin IX. The chain is Ferrochelatase from Alcanivorax borkumensis (strain ATCC 700651 / DSM 11573 / NCIMB 13689 / SK2).